The chain runs to 428 residues: 3-oxo-tetronate kinase (428 aa).

ATP-binding positions include serine 267, 365–368 (GGET), and glycine 409.

This sequence belongs to the four-carbon acid sugar kinase family.

The catalysed reaction is 3-dehydro-L-erythronate + ATP = 3-dehydro-4-O-phospho-L-erythronate + ADP + H(+). It carries out the reaction 3-dehydro-D-erythronate + ATP = 3-dehydro-4-O-phospho-D-erythronate + ADP + H(+). Catalyzes the ATP-dependent phosphorylation of 3-oxo-tetronate to 3-oxo-tetronate 4-phosphate. This is 3-oxo-tetronate kinase from Burkholderia multivorans (strain ATCC 17616 / 249).